Reading from the N-terminus, the 61-residue chain is UPF0434 protein Avin_14770 (61 aa).

This sequence belongs to the UPF0434 family.

This Azotobacter vinelandii (strain DJ / ATCC BAA-1303) protein is UPF0434 protein Avin_14770.